The primary structure comprises 181 residues: Protein GrpE (181 aa).

Belongs to the GrpE family. As to quaternary structure, homodimer.

The protein localises to the cytoplasm. Its function is as follows. Participates actively in the response to hyperosmotic and heat shock by preventing the aggregation of stress-denatured proteins, in association with DnaK and GrpE. It is the nucleotide exchange factor for DnaK and may function as a thermosensor. Unfolded proteins bind initially to DnaJ; upon interaction with the DnaJ-bound protein, DnaK hydrolyzes its bound ATP, resulting in the formation of a stable complex. GrpE releases ADP from DnaK; ATP binding to DnaK triggers the release of the substrate protein, thus completing the reaction cycle. Several rounds of ATP-dependent interactions between DnaJ, DnaK and GrpE are required for fully efficient folding. The chain is Protein GrpE from Delftia acidovorans (strain DSM 14801 / SPH-1).